We begin with the raw amino-acid sequence, 507 residues long: F-box only protein 31 (507 aa).

Positions 19 to 42 (RQQRRGPAETAAADSEADTDPEEE) are disordered. S33 is subject to Phosphoserine. A compositionally biased stretch (acidic residues) spans 33 to 42 (SEADTDPEEE). T37 bears the Phosphothreonine mark. Positions 50–55 (RCSLLE) match the D box motif. An F-box domain is found at 50 to 96 (RCSLLELPPELLVEIFASLPGTDLPSLAQVCSRFRRILHTDTIWRRR). Zn(2+)-binding residues include C192, H200, C216, and H222. The residue at position 264 (S264) is a Phosphoserine; by ATM. The DDL motif motif lies at 283–285 (DDL). Residues 366–417 (EQEAGEGAAPPREPSAKAADGPPAKDGKEPGGGAEAAEQSASSGQGQPFVLP) are disordered. The span at 400–412 (EAAEQSASSGQGQ) shows a compositional bias: low complexity. Residue S448 is modified to Phosphoserine.

Belongs to the FBXO31 family. Part of a SCF (SKP1-cullin-F-box) protein ligase complex SCF(FBXO31) composed of CUL1, SKP1, RBX1 and FBXO31. Interacts (when phosphorylated at Ser-33) with CDC20, promoting ubiquitination by the APC/C complex. Post-translationally, phosphorylation at Ser-264 by ATM following gamma-irradiation results in its stabilization. Phosphorylation at Ser-448 in absence of stress promotes its ubiquitination and degradation by the SCF(FBXO46) complex. Phosphorylation at Ser-33 by AKT1 promotes association with CDC20 and ubiquitination by the APC/C complex. Ubiquitinated by the SCF(FBXO46) complex in absence of stress, promoting its degradation. Ubiquitinated by the APC/C complex following phosphorylation at Ser-33, leading to its degradation by the proteasome.

Its subcellular location is the cytoplasm. It localises to the cytoskeleton. The protein resides in the microtubule organizing center. It is found in the centrosome. The protein operates within protein modification; protein ubiquitination. In terms of biological role, substrate-recognition component of the SCF(FBXO31) protein ligase complex, which specifically mediates the ubiquitination of proteins amidated at their C-terminus in response to oxidative stress, leading to their degradation by the proteasome. FBXO31 specifically recognizes and binds C-terminal peptides bearing an amide: C-terminal amidation in response to oxidative stress takes place following protein fragmentation. The SCF(FBXO31) also plays a role in G1 arrest following DNA damage by mediating ubiquitination of phosphorylated cyclin-D1 (CCND1), promoting its degradation by the proteasome, resulting in G1 arrest. The SCF(FBXO31) complex is however not a major regulator of CCND1 stability during the G1/S transition. In response to genotoxic stress, the SCF(FBXO31) complex directs ubiquitination and degradation of phosphorylated MDM2, thereby promoting p53/TP53-mediated DNA damage response. SCF(FBXO31) complex is required for genomic integrity by catalyzing ubiquitination and degradation of cyclin-A (CCNA1 and/or CCNA2) during the G1 phase. In response to genotoxic stress, the SCF(FBXO31) complex directs ubiquitination and degradation of phosphorylated FBXO46 and MAP2K6. SCF(FBXO31) complex promotes ubiquitination and degradation of CDT1 during the G2 phase to prevent re-replication. The SCF(FBXO31) complex also mediates ubiquitination and degradation of DUSP6, OGT and PARD6A. The polypeptide is F-box only protein 31 (Mus musculus (Mouse)).